Here is a 488-residue protein sequence, read N- to C-terminus: Glutamyl-tRNA(Gln) amidotransferase subunit A (488 aa).

Residues K77 and S152 each act as charge relay system in the active site. S176 acts as the Acyl-ester intermediate in catalysis.

It belongs to the amidase family. GatA subfamily. In terms of assembly, heterotrimer of A, B and C subunits.

It carries out the reaction L-glutamyl-tRNA(Gln) + L-glutamine + ATP + H2O = L-glutaminyl-tRNA(Gln) + L-glutamate + ADP + phosphate + H(+). Functionally, allows the formation of correctly charged Gln-tRNA(Gln) through the transamidation of misacylated Glu-tRNA(Gln) in organisms which lack glutaminyl-tRNA synthetase. The reaction takes place in the presence of glutamine and ATP through an activated gamma-phospho-Glu-tRNA(Gln). This is Glutamyl-tRNA(Gln) amidotransferase subunit A from Streptococcus pneumoniae (strain JJA).